We begin with the raw amino-acid sequence, 317 residues long: Methionyl-tRNA formyltransferase (317 aa).

Residue 112-115 participates in (6S)-5,6,7,8-tetrahydrofolate binding; it reads SILP.

Belongs to the Fmt family.

It carries out the reaction L-methionyl-tRNA(fMet) + (6R)-10-formyltetrahydrofolate = N-formyl-L-methionyl-tRNA(fMet) + (6S)-5,6,7,8-tetrahydrofolate + H(+). Its function is as follows. Attaches a formyl group to the free amino group of methionyl-tRNA(fMet). The formyl group appears to play a dual role in the initiator identity of N-formylmethionyl-tRNA by promoting its recognition by IF2 and preventing the misappropriation of this tRNA by the elongation apparatus. This Actinobacillus succinogenes (strain ATCC 55618 / DSM 22257 / CCUG 43843 / 130Z) protein is Methionyl-tRNA formyltransferase.